Reading from the N-terminus, the 364-residue chain is Putative agmatine deiminase (364 aa).

Cys355 serves as the catalytic Amidino-cysteine intermediate.

The protein belongs to the agmatine deiminase family.

The catalysed reaction is agmatine + H2O = N-carbamoylputrescine + NH4(+). In Mycoplasma capricolum subsp. capricolum (strain California kid / ATCC 27343 / NCTC 10154), this protein is Putative agmatine deiminase.